The following is a 326-amino-acid chain: Metallophosphoesterase domain-containing protein 1 (326 aa).

This sequence belongs to the UPF0046 family.

May have metallophosphoesterase activity (in vitro). The polypeptide is Metallophosphoesterase domain-containing protein 1 (Mpped1) (Mus musculus (Mouse)).